Here is a 592-residue protein sequence, read N- to C-terminus: Colicin-A (592 aa).

Composition is skewed to gly residues over residues 1–13 and 23–34; these read MPGF…GDGT and PEPGGGSHGNSG. Disordered regions lie at residues 1–57 and 373–395; these read MPGF…PGDS and RQRQ…KAKD. The next 2 membrane-spanning stretches (helical) occupy residues 528–548 and 555–575; these read WVLS…TLGA and VPAI…GALI.

Belongs to the channel forming colicin family.

The protein localises to the cell membrane. In terms of biological role, this colicin is a channel-forming colicin. This class of transmembrane toxins depolarize the cytoplasmic membrane, leading to dissipation of cellular energy. Functionally, colicins are polypeptide toxins produced by and active against E.coli and closely related bacteria. This is Colicin-A (caa) from Citrobacter freundii.